Consider the following 183-residue polypeptide: Translation initiation factor IF-3 (183 aa).

The protein belongs to the IF-3 family. In terms of assembly, monomer.

Its subcellular location is the cytoplasm. IF-3 binds to the 30S ribosomal subunit and shifts the equilibrium between 70S ribosomes and their 50S and 30S subunits in favor of the free subunits, thus enhancing the availability of 30S subunits on which protein synthesis initiation begins. The chain is Translation initiation factor IF-3 from Pseudomonas entomophila (strain L48).